A 457-amino-acid chain; its full sequence is Cystathionine beta-lyase, chloroplastic (457 aa).

The transit peptide at 1-51 (MFSRPFVTPVTIDLQVKSITAGNMWEGLGFYKPANSKSNQMICSKGFRLNC) directs the protein to the chloroplast. Pyridoxal 5'-phosphate is bound by residues tyrosine 120, arginine 122, glycine 150, methionine 151, serine 268, and threonine 270. Lysine 271 bears the N6-(pyridoxal phosphate)lysine mark.

This sequence belongs to the trans-sulfuration enzymes family. In terms of assembly, forms homodimers. May form homotetramers from two homodimers. Pyridoxal 5'-phosphate serves as cofactor.

It localises to the plastid. The protein localises to the chloroplast. It carries out the reaction L,L-cystathionine + H2O = L-homocysteine + pyruvate + NH4(+). It catalyses the reaction an S-substituted L-cysteine + H2O = a thiol + pyruvate + NH4(+). Catalyzes the degradation of cystathionine. The protein is Cystathionine beta-lyase, chloroplastic of Mimosa pudica (Sensitive plant).